Here is a 318-residue protein sequence, read N- to C-terminus: Ribosomal RNA small subunit methyltransferase H (318 aa).

S-adenosyl-L-methionine contacts are provided by residues 34-36, Asp52, Phe79, Asp100, and Gln107; that span reads GGY. The segment at 286-318 is disordered; sequence GPAPDEARANPRARSAKLRAAARTAAPAWETVS. The segment covering 303-318 has biased composition (low complexity); the sequence is LRAAARTAAPAWETVS.

The protein belongs to the methyltransferase superfamily. RsmH family.

Its subcellular location is the cytoplasm. It carries out the reaction cytidine(1402) in 16S rRNA + S-adenosyl-L-methionine = N(4)-methylcytidine(1402) in 16S rRNA + S-adenosyl-L-homocysteine + H(+). Specifically methylates the N4 position of cytidine in position 1402 (C1402) of 16S rRNA. The protein is Ribosomal RNA small subunit methyltransferase H of Paramagnetospirillum magneticum (strain ATCC 700264 / AMB-1) (Magnetospirillum magneticum).